We begin with the raw amino-acid sequence, 358 residues long: MFNSFGNIFRLTSFGESHGPGVGGVIDGFPAGIKIDMDFVQQELNRRRPGQSLLTTSRKEPDTVEFLSGIFEGKSTGCPIGFVVWNKNQHSNDYENIKNLFRPSHADYTYMQKYGIRDYRGGGRSSARETISRVVAGALAKLALKQLGISVTAYTSQVGPVKLDKDYKSYNLDLIETNDVRCPDPEKAKEMAELIWKIKGEGDTIGGVVSCVIKGCPIGLGQPVFGKLHAALGNAMLSINAVKGFSYGQGFDSMELKGSEQNDVFYNNNGRVETKSNYSGGIQGGISNGQDIYFRVAFKPVATILMEQHTVNINGTDTTMKAKGRHDACVLPRAVPIVEAMAAMTILDYYLIDRTTQL.

Position 47 (Arg47) interacts with NADP(+). Residues 124–126 (RSS), 240–241 (NA), Gly284, 299–303 (KPVAT), and Arg325 contribute to the FMN site.

This sequence belongs to the chorismate synthase family. Homotetramer. FMNH2 is required as a cofactor.

The enzyme catalyses 5-O-(1-carboxyvinyl)-3-phosphoshikimate = chorismate + phosphate. It functions in the pathway metabolic intermediate biosynthesis; chorismate biosynthesis; chorismate from D-erythrose 4-phosphate and phosphoenolpyruvate: step 7/7. Functionally, catalyzes the anti-1,4-elimination of the C-3 phosphate and the C-6 proR hydrogen from 5-enolpyruvylshikimate-3-phosphate (EPSP) to yield chorismate, which is the branch point compound that serves as the starting substrate for the three terminal pathways of aromatic amino acid biosynthesis. This reaction introduces a second double bond into the aromatic ring system. This Phocaeicola vulgatus (strain ATCC 8482 / DSM 1447 / JCM 5826 / CCUG 4940 / NBRC 14291 / NCTC 11154) (Bacteroides vulgatus) protein is Chorismate synthase.